We begin with the raw amino-acid sequence, 198 residues long: Large ribosomal subunit protein bL25 (198 aa).

It belongs to the bacterial ribosomal protein bL25 family. CTC subfamily. In terms of assembly, part of the 50S ribosomal subunit; part of the 5S rRNA/L5/L18/L25 subcomplex. Contacts the 5S rRNA. Binds to the 5S rRNA independently of L5 and L18.

This is one of the proteins that binds to the 5S RNA in the ribosome where it forms part of the central protuberance. The chain is Large ribosomal subunit protein bL25 from Pseudomonas putida (strain W619).